A 272-amino-acid chain; its full sequence is Undecaprenyl-diphosphatase (272 aa).

Transmembrane regions (helical) follow at residues leucine 2–isoleucine 22, valine 50–phenylalanine 70, phenylalanine 83–phenylalanine 103, leucine 110–isoleucine 130, leucine 148–threonine 168, leucine 195–phenylalanine 215, leucine 220–phenylalanine 240, and phenylalanine 250–alanine 270.

Belongs to the UppP family.

It localises to the cell membrane. The enzyme catalyses di-trans,octa-cis-undecaprenyl diphosphate + H2O = di-trans,octa-cis-undecaprenyl phosphate + phosphate + H(+). Its function is as follows. Catalyzes the dephosphorylation of undecaprenyl diphosphate (UPP). Confers resistance to bacitracin. This is Undecaprenyl-diphosphatase from Acetivibrio thermocellus (strain ATCC 27405 / DSM 1237 / JCM 9322 / NBRC 103400 / NCIMB 10682 / NRRL B-4536 / VPI 7372) (Clostridium thermocellum).